Consider the following 153-residue polypeptide: Fucose mutarotase (153 aa).

Residue His24 is the Proton donor of the active site. Asp32 contributes to the substrate binding site. The active site involves Asp69. Met78, Tyr119, Tyr137, and Asn139 together coordinate substrate. The active site involves Tyr119.

It belongs to the RbsD / FucU family.

It catalyses the reaction alpha-L-fucose = beta-L-fucose. Functionally, involved in the interconversion between alpha- and beta-L-fucoses. In Danio rerio (Zebrafish), this protein is Fucose mutarotase (fuom).